Here is an 83-residue protein sequence, read N- to C-terminus: RNA-binding protein Hfq (83 aa).

The 61-residue stretch at 9-69 folds into the Sm domain; that stretch reads DQLLNTARKE…ISTIIPAKPI (61 aa).

This sequence belongs to the Hfq family. In terms of assembly, homohexamer.

In terms of biological role, RNA chaperone that binds small regulatory RNA (sRNAs) and mRNAs to facilitate mRNA translational regulation in response to envelope stress, environmental stress and changes in metabolite concentrations. Also binds with high specificity to tRNAs. The protein is RNA-binding protein Hfq of Leptospira biflexa serovar Patoc (strain Patoc 1 / Ames).